The sequence spans 407 residues: Na(+)-translocating NADH-quinone reductase subunit F (407 aa).

A helical transmembrane segment spans residues 3–23 (IILGVVMFTLIVLALVLVILF). In terms of domain architecture, 2Fe-2S ferredoxin-type spans 32–126 (GDITISINGD…DMDIELPEEI (95 aa)). The [2Fe-2S] cluster site is built by Cys69, Cys75, Cys78, and Cys110. The FAD-binding FR-type domain maps to 129-269 (VKKWECTVIS…SGPFGEFFAK (141 aa)). The catalytic stretch occupies residues 272–389 (DAEMVFIGGG…PMMNAAVIGM (118 aa)).

It belongs to the NqrF family. Composed of six subunits; NqrA, NqrB, NqrC, NqrD, NqrE and NqrF. [2Fe-2S] cluster serves as cofactor. FAD is required as a cofactor.

The protein resides in the cell inner membrane. The catalysed reaction is a ubiquinone + n Na(+)(in) + NADH + H(+) = a ubiquinol + n Na(+)(out) + NAD(+). NQR complex catalyzes the reduction of ubiquinone-1 to ubiquinol by two successive reactions, coupled with the transport of Na(+) ions from the cytoplasm to the periplasm. The first step is catalyzed by NqrF, which accepts electrons from NADH and reduces ubiquinone-1 to ubisemiquinone by a one-electron transfer pathway. The sequence is that of Na(+)-translocating NADH-quinone reductase subunit F from Vibrio anguillarum (Listonella anguillarum).